Reading from the N-terminus, the 80-residue chain is Small membrane A-kinase anchor protein (80 aa).

Gly-2 carries the N-myristoyl glycine lipid modification.

This sequence belongs to the small membrane AKAP family. Post-translationally, may be palmitoylated at Cys-3.

It localises to the cell membrane. Its function is as follows. Binds to type I regulatory subunits of protein kinase A and may anchor/target them to the plasma membrane. This chain is Small membrane A-kinase anchor protein, found in Tetraodon nigroviridis (Spotted green pufferfish).